The following is a 905-amino-acid chain: Core protein VP3 (905 aa).

This sequence belongs to the orbivirus VP3 family.

Its subcellular location is the virion. Functionally, the VP3 protein is one of the five proteins (with VP1, VP4, VP6 and VP7) which form the inner capsid of the virus. This African horse sickness virus (AHSV) protein is Core protein VP3 (Segment-3).